The primary structure comprises 191 residues: Adenylate kinase (191 aa).

11–16 (GSGKGT) contributes to the ATP binding site. Positions 31 to 60 (STGEILRREIKDKTELGKIAEEYINQGQLL) are NMP. AMP contacts are provided by residues Thr32, Arg37, 58–60 (QLL), 86–89 (GFPR), and Gln93. The interval 127–137 (KRGKLFSRKDD) is LID. ATP is bound at residue Arg128. Residues Arg134 and Arg145 each contribute to the AMP site. Position 173 (Asn173) interacts with ATP.

This sequence belongs to the adenylate kinase family. Monomer.

It is found in the cytoplasm. It carries out the reaction AMP + ATP = 2 ADP. It functions in the pathway purine metabolism; AMP biosynthesis via salvage pathway; AMP from ADP: step 1/1. Functionally, catalyzes the reversible transfer of the terminal phosphate group between ATP and AMP. Plays an important role in cellular energy homeostasis and in adenine nucleotide metabolism. This chain is Adenylate kinase, found in Azobacteroides pseudotrichonymphae genomovar. CFP2.